A 616-amino-acid polypeptide reads, in one-letter code: uncharacterized protein (616 aa).

Disordered regions lie at residues 166–243 (SRTY…TPEL) and 272–298 (DHEEEEGQDDDEETEIEIDRGGPIEEI). A compositionally biased stretch (basic and acidic residues) spans 184-200 (RVDESRPSENSSRHDYV). Over residues 221–237 (TRTSNVTQTQPPTNQVF) the composition is skewed to polar residues. A compositionally biased stretch (acidic residues) spans 272 to 287 (DHEEEEGQDDDEETEI). One can recognise a Ubiquitin-like domain in the interval 343 to 417 (ILIKLKFMND…VHCHISTTPY (75 aa)).

This is an uncharacterized protein from Caenorhabditis elegans.